The primary structure comprises 613 residues: Pheromone-processing carboxypeptidase kex1 (613 aa).

Positions 1–19 (MTMSFCALLFFLIISPTLA) are cleaved as a signal peptide. Topologically, residues 20–506 (ATKSAADYYV…KETEWKAYAK (487 aa)) are lumenal. 2 N-linked (GlcNAc...) asparagine glycosylation sites follow: asparagine 102 and asparagine 109. Active-site residues include serine 173 and aspartate 373. Residues asparagine 424 and asparagine 432 are each glycosylated (N-linked (GlcNAc...) asparagine). Residue histidine 435 is part of the active site. The interval 463 to 490 (QPADSRIDGEKLPQTSVGGHPNSTAAEQ) is disordered. Over residues 475–489 (PQTSVGGHPNSTAAE) the composition is skewed to polar residues. A glycan (N-linked (GlcNAc...) asparagine) is linked at asparagine 484. The helical transmembrane segment at 507–527 (SGEAALIVVIIGVTVWGFFIW) threads the bilayer. Over 528–613 (RSRRRNRGYE…ASSREDGTHP (86 aa)) the chain is Cytoplasmic. Residues 559–613 (GAGDVEAGDFDESELDTLHSPGLERENYAVGDDSDEDDPNHPRPTASSREDGTHP) form a disordered region. The span at 564 to 573 (EAGDFDESEL) shows a compositional bias: acidic residues.

This sequence belongs to the peptidase S10 family.

Its subcellular location is the golgi apparatus. It is found in the trans-Golgi network membrane. It catalyses the reaction Preferential release of a C-terminal arginine or lysine residue.. Protease with a carboxypeptidase B-like function involved in the C-terminal processing of the lysine and arginine residues from protein precursors. Promotes cell fusion and is involved in the programmed cell death. The chain is Pheromone-processing carboxypeptidase kex1 (kex1) from Aspergillus clavatus (strain ATCC 1007 / CBS 513.65 / DSM 816 / NCTC 3887 / NRRL 1 / QM 1276 / 107).